The sequence spans 693 residues: Elongation factor G (693 aa).

The tr-type G domain maps to 8-282; it reads KNTRNIGIMA…AAIEYLPSPL (275 aa). GTP contacts are provided by residues 17 to 24, 81 to 85, and 135 to 138; these read AHIDAGKT, DTPGH, and NKMD.

It belongs to the TRAFAC class translation factor GTPase superfamily. Classic translation factor GTPase family. EF-G/EF-2 subfamily.

The protein resides in the cytoplasm. Its function is as follows. Catalyzes the GTP-dependent ribosomal translocation step during translation elongation. During this step, the ribosome changes from the pre-translocational (PRE) to the post-translocational (POST) state as the newly formed A-site-bound peptidyl-tRNA and P-site-bound deacylated tRNA move to the P and E sites, respectively. Catalyzes the coordinated movement of the two tRNA molecules, the mRNA and conformational changes in the ribosome. This Macrococcus caseolyticus (strain JCSC5402) (Macrococcoides caseolyticum) protein is Elongation factor G.